Reading from the N-terminus, the 289-residue chain is Protease HtpX homolog (289 aa).

The next 2 helical transmembrane spans lie at 8–28 (LALL…VIGG) and 29–49 (SSGL…SWYQ). Residue histidine 132 coordinates Zn(2+). The active site involves glutamate 133. Histidine 136 is a Zn(2+) binding site. Helical transmembrane passes span 151 to 171 (VAGA…FGGI) and 183 to 203 (LGVL…QLAI). Glutamate 208 provides a ligand contact to Zn(2+).

It belongs to the peptidase M48B family. Zn(2+) serves as cofactor.

The protein resides in the cell inner membrane. The chain is Protease HtpX homolog from Trichormus variabilis (strain ATCC 29413 / PCC 7937) (Anabaena variabilis).